We begin with the raw amino-acid sequence, 430 residues long: Adenylosuccinate synthetase (430 aa).

GTP is bound by residues 12–18 and 40–42; these read GDEGKGK and GHT. The Proton acceptor role is filled by D13. Positions 13 and 40 each coordinate Mg(2+). Residues 13–16, 38–41, T130, R144, Q224, T239, and R303 contribute to the IMP site; these read DEGK and NAGH. The Proton donor role is filled by H41. Residue 299–305 coordinates substrate; it reads VNTGRKR. Residues R305, 331–333, and 413–415 each bind GTP; these read KLD and STS.

The protein belongs to the adenylosuccinate synthetase family. Homodimer. The cofactor is Mg(2+).

The protein localises to the cytoplasm. The enzyme catalyses IMP + L-aspartate + GTP = N(6)-(1,2-dicarboxyethyl)-AMP + GDP + phosphate + 2 H(+). It functions in the pathway purine metabolism; AMP biosynthesis via de novo pathway; AMP from IMP: step 1/2. Plays an important role in the de novo pathway of purine nucleotide biosynthesis. Catalyzes the first committed step in the biosynthesis of AMP from IMP. This is Adenylosuccinate synthetase from Rhodopseudomonas palustris (strain BisA53).